A 668-amino-acid chain; its full sequence is MDTRVLRLTLALVALSGVLADSESCSSAIVNDYKLKQKEIQHLVDTINKPVYPDFKDTRGIIDESKLKGLGTLPRREVFSLFDERNWAEAAKVVELLLEPKTFREFIHLADIIHHRVNEDLFLYALSVAIAHRPDCQGVQVPRVLDIYPDKFLRKEVIHKIKEVSNEGAYLDKVPVIDATEVSDNHLDPNQELLYFLEDLGMNSHHHHWHVIHPAIWLPKHGGVKDRKGELFFYMHKQMVARYDTERLSNDLPRVRPFENWNDPIDEGYSPHLIIDKTGYKYAYRPQGVIVHDLPNLPKTKMFEWKNRIMVGIRKGSLISANKTQVPLNNDHGIDLLGDVVESSLLSVNRVFYGNLHCYAHVIAGKVTDPQSTYGEKNGAMYDVATSARDPLFYSWHKFIDNIFQEHKETLQPYNKDELNFPDVQVDSLRINVANGTYENIVRTYWQNSLFKIAKGFTFTTEGSVLVKVKHLNHETFYYNLEVTNNALEEKHGVVRIFGAVINDERGHPYILNDQRHLVIELDKFTVNLKPGKNSVRQPCYNSAVTAKYDVFYGDVESQKPQEGCNCGWPDYMLLPKGKYEGLRFRVFAIVTNHDEDKVSDQETCLCGDAVAYCGAHNQKYPDKKPMGFPFDRRIDERTFEHFHTPNMIATDVIIKFTGEFLPPKGDI.

An N-terminal signal peptide occupies residues 1-22 (MDTRVLRLTLALVALSGVLADS). Residues histidine 206, histidine 210, and histidine 236 each contribute to the Cu cation site. Asparagine 322 is a glycosylation site (N-linked (GlcNAc...) asparagine). Residues histidine 357, histidine 361, and histidine 397 each coordinate Cu cation. The cysteines at positions 567 and 614 are disulfide-linked.

It belongs to the tyrosinase family. Hemocyanin subfamily. 36-chain polymer consisting of 6 hexamers, each of which includes 4 different chains, A, B, C and D. Hemolymph.

It is found in the secreted. The protein resides in the extracellular space. Functionally, hemocyanins are copper-containing oxygen carriers occurring freely dissolved in the hemolymph of many mollusks and arthropods. The chain is Hemocyanin subunit D (HCD) from Scutigera coleoptrata (House centipede).